We begin with the raw amino-acid sequence, 311 residues long: tRNA-cytidine(32) 2-sulfurtransferase (311 aa).

Residues 47 to 52 carry the PP-loop motif motif; sequence SGGKDS. The [4Fe-4S] cluster site is built by cysteine 122, cysteine 125, and cysteine 213.

This sequence belongs to the TtcA family. As to quaternary structure, homodimer. Mg(2+) serves as cofactor. Requires [4Fe-4S] cluster as cofactor.

The protein resides in the cytoplasm. It carries out the reaction cytidine(32) in tRNA + S-sulfanyl-L-cysteinyl-[cysteine desulfurase] + AH2 + ATP = 2-thiocytidine(32) in tRNA + L-cysteinyl-[cysteine desulfurase] + A + AMP + diphosphate + H(+). The protein operates within tRNA modification. In terms of biological role, catalyzes the ATP-dependent 2-thiolation of cytidine in position 32 of tRNA, to form 2-thiocytidine (s(2)C32). The sulfur atoms are provided by the cysteine/cysteine desulfurase (IscS) system. The sequence is that of tRNA-cytidine(32) 2-sulfurtransferase from Salmonella arizonae (strain ATCC BAA-731 / CDC346-86 / RSK2980).